Here is a 239-residue protein sequence, read N- to C-terminus: Ribonuclease P protein component 3 (239 aa).

The protein belongs to the eukaryotic/archaeal RNase P protein component 3 family. In terms of assembly, consists of a catalytic RNA component and at least 4-5 protein subunits.

The protein localises to the cytoplasm. The catalysed reaction is Endonucleolytic cleavage of RNA, removing 5'-extranucleotides from tRNA precursor.. Its function is as follows. Part of ribonuclease P, a protein complex that generates mature tRNA molecules by cleaving their 5'-ends. The polypeptide is Ribonuclease P protein component 3 (Methanosarcina barkeri (strain Fusaro / DSM 804)).